The sequence spans 337 residues: uncharacterized protein (337 aa).

The protein belongs to the NAD(P)-dependent epimerase/dehydratase family.

This is an uncharacterized protein from Escherichia coli (strain K12).